The sequence spans 305 residues: Ribonucleoside-diphosphate reductase small subunit (305 aa).

3 residues coordinate Fe cation: glutamate 64, glutamate 94, and histidine 97. The active site involves tyrosine 101. A helical membrane pass occupies residues 150–170 (ILMFLIVEGIYFISSFYSISL). The Fe cation site is built by glutamate 157, glutamate 191, and histidine 194.

The protein belongs to the ribonucleoside diphosphate reductase small chain family. In terms of assembly, heterotetramer composed of a homodimer of the large subunit (R1) and a homodimer of the small subunit (R2). Larger multisubunit protein complex are also active, composed of (R1)n(R2)n. It depends on Fe cation as a cofactor.

It is found in the host membrane. The catalysed reaction is a 2'-deoxyribonucleoside 5'-diphosphate + [thioredoxin]-disulfide + H2O = a ribonucleoside 5'-diphosphate + [thioredoxin]-dithiol. Ribonucleoside-diphosphate reductase holoenzyme provides the precursors necessary for viral DNA synthesis. Allows virus growth in non-dividing cells, as well as reactivation from latency in infected hosts. Catalyzes the biosynthesis of deoxyribonucleotides from the corresponding ribonucleotides. This is Ribonucleoside-diphosphate reductase small subunit from Homo sapiens (Human).